The sequence spans 906 residues: Protein kintoun (906 aa).

The residue at position 376 (Ser-376) is a Phosphoserine. Disordered regions lie at residues 614–691 (QQQK…RKQR) and 793–906 (RKKN…DEDM). Over residues 618-631 (KLNKKQRKRNKKQR) the composition is skewed to basic residues. Residues 639–655 (EELKAAQEELQLQHEKQ) are compositionally biased toward basic and acidic residues. Over residues 793–808 (RKKNQKRRDCKLRAQQ) the composition is skewed to basic residues. Ser-812 carries the post-translational modification Phosphoserine. Residues 837 to 850 (ANAQYFKQPNNNNG) show a composition bias toward polar residues. Basic and acidic residues-rich tracts occupy residues 851–865 (HDQD…HDSG) and 875–887 (NNEE…EADA). Positions 894–906 (EMDDDDEDEDEDM) are enriched in acidic residues.

Belongs to the PIH1 family. Kintoun subfamily. As to quaternary structure, interacts with Pp1alpha-96A, Pp1-87B, Pp1-13C and flw.

It localises to the cytoplasm. In terms of biological role, required for cytoplasmic pre-assembly of axonemal dyneins, thereby playing a central role in motility in cilia and flagella. Involved in pre-assembly of dynein arm complexes in the cytoplasm before intraflagellar transport loads them for the ciliary compartment. In Drosophila virilis (Fruit fly), this protein is Protein kintoun.